Consider the following 356-residue polypeptide: UDP-N-acetylglucosamine--N-acetylmuramyl-(pentapeptide) pyrophosphoryl-undecaprenol N-acetylglucosamine transferase (356 aa).

Residues R166, S196, and Q290 each contribute to the UDP-N-acetyl-alpha-D-glucosamine site.

It belongs to the glycosyltransferase 28 family. MurG subfamily.

The protein resides in the cell membrane. It catalyses the reaction Mur2Ac(oyl-L-Ala-gamma-D-Glu-L-Lys-D-Ala-D-Ala)-di-trans,octa-cis-undecaprenyl diphosphate + UDP-N-acetyl-alpha-D-glucosamine = beta-D-GlcNAc-(1-&gt;4)-Mur2Ac(oyl-L-Ala-gamma-D-Glu-L-Lys-D-Ala-D-Ala)-di-trans,octa-cis-undecaprenyl diphosphate + UDP + H(+). The protein operates within cell wall biogenesis; peptidoglycan biosynthesis. Cell wall formation. Catalyzes the transfer of a GlcNAc subunit on undecaprenyl-pyrophosphoryl-MurNAc-pentapeptide (lipid intermediate I) to form undecaprenyl-pyrophosphoryl-MurNAc-(pentapeptide)GlcNAc (lipid intermediate II). The polypeptide is UDP-N-acetylglucosamine--N-acetylmuramyl-(pentapeptide) pyrophosphoryl-undecaprenol N-acetylglucosamine transferase (Staphylococcus aureus (strain MW2)).